The primary structure comprises 346 residues: Glycerol-1-phosphate dehydrogenase [NAD(P)+] (346 aa).

NAD(+)-binding positions include 93–97 (GSIID) and 115–118 (TTAS). Residue D120 coordinates substrate. Position 124 (S124) interacts with NAD(+). D167 lines the substrate pocket. Residues D167 and H247 each coordinate Zn(2+). H251 is a substrate binding site. A Zn(2+)-binding site is contributed by H263.

The protein belongs to the glycerol-1-phosphate dehydrogenase family. Zn(2+) is required as a cofactor.

The protein resides in the cytoplasm. It carries out the reaction sn-glycerol 1-phosphate + NAD(+) = dihydroxyacetone phosphate + NADH + H(+). The catalysed reaction is sn-glycerol 1-phosphate + NADP(+) = dihydroxyacetone phosphate + NADPH + H(+). It participates in membrane lipid metabolism; glycerophospholipid metabolism. Functionally, catalyzes the NAD(P)H-dependent reduction of dihydroxyacetonephosphate (DHAP or glycerone phosphate) to glycerol 1-phosphate (G1P). The G1P thus generated is used as the glycerophosphate backbone of phospholipids in the cellular membranes of Archaea. The protein is Glycerol-1-phosphate dehydrogenase [NAD(P)+] of Pyrococcus horikoshii (strain ATCC 700860 / DSM 12428 / JCM 9974 / NBRC 100139 / OT-3).